The following is a 312-amino-acid chain: Phospholipid phosphatase 3 (312 aa).

Residues 1-33 are Cytoplasmic-facing; that stretch reads MQSYKYDKAIVPESKNGGSPALNNNPRKGGSKR. Ser19 carries the phosphoserine modification. Residues 34–54 form a helical membrane-spanning segment; the sequence is VLLICLDLFCLFMAALPFLII. At 55 to 85 the chain is on the extracellular side; it reads ETSTIKPYRRGFYCNDESIKYPLKVSETIND. Residues 86–106 traverse the membrane as a helical segment; sequence AVLCAVGIVIAILAIITGEFY. The Cytoplasmic segment spans residues 107 to 123; the sequence is RIYYLKEKSRSTTQNPY. Positions 109 to 110 match the Dityrosine basolateral targeting motif motif; that stretch reads YY. Residues 124–144 form a helical membrane-spanning segment; the sequence is VAALYKQVGCFLFGCAISQSF. Topologically, residues 145-194 are extracellular; sequence TDIAKVSIGRLRPHFLSVCDPDFSQINCSEGYIQNYRCRGEDSKVQEARK. Positions 149–157 are phosphatase sequence motif I; sequence KVSIGRLRP. Asn171 carries an N-linked (GlcNAc...) asparagine glycan. Residues 183–185 carry the Integrin-binding motif motif; it reads RGE. A helical membrane pass occupies residues 195–215; that stretch reads SFFSGHASFSMFTMLYLVLYL. Positions 197-200 are phosphatase sequence motif II; the sequence is FSGH. Residue His200 is the Proton donors of the active site. At 216 to 226 the chain is on the cytoplasmic side; sequence QARFTWRGARL. The helical transmembrane segment at 227 to 244 threads the bilayer; the sequence is LRPLLQFTLLMMAFYTGL. The segment at 245–256 is phosphatase sequence motif III; it reads SRVSDYKHHPSD. Residues 245-258 are Extracellular-facing; it reads SRVSDYKHHPSDVL. Catalysis depends on His252, which acts as the Nucleophile. A helical transmembrane segment spans residues 259 to 279; that stretch reads AGFAQGALVACCIVFFVSDLF. The segment at 276–312 is mediates interaction with CTNND1; that stretch reads SDLFKTKTSLSLPAPAIRREILSPVDIIDRNNHHNMV. Topologically, residues 280–312 are cytoplasmic; that stretch reads KTKTSLSLPAPAIRREILSPVDIIDRNNHHNMV.

It belongs to the PA-phosphatase related phosphoesterase family. As to quaternary structure, forms functional homodimers and homooligomers that are not required for substrate recognition and catalytic activity. Can also form heterooligomers with other PLPP2 and PLPP3. Interacts with CTNND1; negatively regulates the PLPP3-mediated stabilization of beta-catenin/CTNNB1. Post-translationally, N-glycosylated. Contains high-mannose oligosaccharides. As to expression, detected in lung, cerebellum and heart atrium.

It is found in the cell membrane. The protein resides in the basolateral cell membrane. Its subcellular location is the endoplasmic reticulum membrane. The protein localises to the endoplasmic reticulum-Golgi intermediate compartment membrane. It localises to the golgi apparatus membrane. It is found in the golgi apparatus. The protein resides in the trans-Golgi network membrane. Its subcellular location is the membrane raft. It catalyses the reaction a 1,2-diacyl-sn-glycero-3-phosphate + H2O = a 1,2-diacyl-sn-glycerol + phosphate. It carries out the reaction 1,2-dihexadecanoyl-sn-glycero-3-phosphate + H2O = 1,2-dihexadecanoyl-sn-glycerol + phosphate. The catalysed reaction is 1,2-di-(9Z-octadecenoyl)-sn-glycero-3-phosphate + H2O = 1,2-di-(9Z-octadecenoyl)-sn-glycerol + phosphate. The enzyme catalyses a monoacyl-sn-glycero-3-phosphate + H2O = a monoacylglycerol + phosphate. It catalyses the reaction (9Z)-octadecenoyl-sn-glycero-3-phosphate + H2O = (9Z-octadecenoyl)-glycerol + phosphate. It carries out the reaction sphing-4-enine 1-phosphate + H2O = sphing-4-enine + phosphate. The catalysed reaction is an N-acylsphing-4-enine 1-phosphate + H2O = an N-acylsphing-4-enine + phosphate. The enzyme catalyses N-(octanoyl)-sphing-4-enine-1-phosphate + H2O = N-octanoylsphing-4-enine + phosphate. It catalyses the reaction N-(9Z-octadecenoyl)-ethanolamine phosphate + H2O = N-(9Z-octadecenoyl) ethanolamine + phosphate. Its pathway is lipid metabolism; phospholipid metabolism. Its activity is regulated as follows. Magnesium-independent phospholipid phosphatase. Insensitive to N-ethylmaleimide. Magnesium-independent phospholipid phosphatase of the plasma membrane that catalyzes the dephosphorylation of a variety of glycerolipid and sphingolipid phosphate esters including phosphatidate/PA, lysophosphatidate/LPA, diacylglycerol pyrophosphate/DGPP, sphingosine 1-phosphate/S1P and ceramide 1-phosphate/C1P. Also acts on N-oleoyl ethanolamine phosphate/N-(9Z-octadecenoyl)-ethanolamine phosphate, a potential physiological compound. Has both an extracellular and an intracellular phosphatase activity, allowing the hydrolysis and the cellular uptake of these bioactive lipid mediators from the milieu, regulating signal transduction in different cellular processes. Through the dephosphorylation of extracellular sphingosine-1-phosphate and the regulation of its extra- and intracellular availability, plays a role in vascular homeostasis, regulating endothelial cell migration, adhesion, survival, proliferation and the production of pro-inflammatory cytokines. By maintaining the appropriate levels of this lipid in the cerebellum, also ensure its proper development and function. Through its intracellular lipid phosphatase activity may act in early compartments of the secretory pathway, regulating the formation of Golgi to endoplasmic reticulum retrograde transport carriers. In terms of biological role, independently of this phosphatase activity may also function in the Wnt signaling pathway and the stabilization of beta-catenin/CTNNB1, thereby regulating cell proliferation, migration and differentiation in angiogenesis or yet in tumor growth. Also plays a role in integrin-mediated cell-cell adhesion in angiogenesis. This Mus musculus (Mouse) protein is Phospholipid phosphatase 3.